The sequence spans 354 residues: Uroporphyrinogen decarboxylase (354 aa).

Residues 27-31, Asp-77, Tyr-153, Thr-208, and His-326 contribute to the substrate site; that span reads RQAGR.

This sequence belongs to the uroporphyrinogen decarboxylase family. As to quaternary structure, homodimer.

It localises to the cytoplasm. It catalyses the reaction uroporphyrinogen III + 4 H(+) = coproporphyrinogen III + 4 CO2. It functions in the pathway porphyrin-containing compound metabolism; protoporphyrin-IX biosynthesis; coproporphyrinogen-III from 5-aminolevulinate: step 4/4. Functionally, catalyzes the decarboxylation of four acetate groups of uroporphyrinogen-III to yield coproporphyrinogen-III. The sequence is that of Uroporphyrinogen decarboxylase from Neisseria gonorrhoeae (strain NCCP11945).